A 265-amino-acid polypeptide reads, in one-letter code: Tyrosine protein kinase-interacting protein (265 aa).

Residues 1 to 14 show a composition bias toward acidic residues; that stretch reads MANEGEEIELTEFP. A disordered region spans residues 1-49; sequence MANEGEEIELTEFPETEKERKDEEKLSSCSEETTDTSSSSSSDHVPAPI. Over 1-238 the chain is Cytoplasmic; the sequence is MANEGEEIEL…LKRLENKVNA (238 aa). The segment covering 15–26 has biased composition (basic and acidic residues); sequence ETEKERKDEEKL. The span at 27 to 43 shows a compositional bias: low complexity; the sequence is SSCSEETTDTSSSSSSD. The residue at position 123 (Tyr-123) is a Phosphotyrosine; by host LCK. Tyr-136 carries the post-translational modification Phosphotyrosine; by host. The segment at 155-164 is CSKH/LBD2; the sequence is EDLQSFLEKY. Residues 172–192 are disordered; it reads KRDLSATWDPGMPTPALPPRP. Positions 183 to 192 are SH3B/LBD1; that stretch reads MPTPALPPRP. Pro residues predominate over residues 183 to 192; the sequence is MPTPALPPRP. An SH3 binding region spans residues 225–234; the sequence is IVKDLKRLEN. Residues 239–259 form a helical membrane-spanning segment; it reads IICLVVVILAVLLLVTVLSIL. Residues 260-265 are Extracellular-facing; it reads HIGMKS.

In terms of assembly, binds host LCK, human WDR48 and human NXF1/TAP. Forms a complex with activated LCK and STAT1 and STAT3. Phosphorylation on Tyr-123 acts as a docking site for the recruitment of STATs 1 and 3.

It localises to the host cell membrane. Functionally, plays a critical role in virus induced T-cell transformation. Binds to T-cell-specific tyrosine kinase LCK SH2 and SH3 domains, thereby activating its kinase activity. Once phosphorylated by host LCK, forms a complex with at least STAT 1 and 3, resulting on the phosphorylation of STAT3 and presumably STAT1, and their migration into the nucleus to induce transcription of target genes. Stimulates host ILF3/NF-AT-90 activity. Association with host NXF1/TAP transduces the signal up-regulating surface expression of adhesion molecules as well as activating NF-kappa-B activity. Acts synergistically with StpC to stimulate NF-kappa-B activity and interleukin-2 gene expression. Activation of NF-kappa-B protects lymphocytes from apoptosis, thereby facilitating viral induced cell transformation. May cause down-regulation of host LCK and cell apoptosis when stably overexpressed ex vivo. Interaction with WDR48 induce degradation of T-cell receptor in a lysosome-dependent fashion, when both proteins are overexpressed. The biological effect of this interaction remains controversial since no T-cell receptor degradation is observed in infected cells. This Saimiriine herpesvirus 2 (strain 484) (SaHV-2) protein is Tyrosine protein kinase-interacting protein.